A 358-amino-acid chain; its full sequence is tRNA-specific 2-thiouridylase MnmA (358 aa).

ATP is bound by residues 22-29 (LVSGGIDS) and Phe-48. The active-site Nucleophile is Cys-105. The cysteines at positions 105 and 201 are disulfide-linked. An ATP-binding site is contributed by Gly-129. The tract at residues 151–153 (KEQ) is interaction with tRNA. Catalysis depends on Cys-201, which acts as the Cysteine persulfide intermediate. An interaction with tRNA region spans residues 306 to 307 (RY).

This sequence belongs to the MnmA/TRMU family.

The protein resides in the cytoplasm. The catalysed reaction is S-sulfanyl-L-cysteinyl-[protein] + uridine(34) in tRNA + AH2 + ATP = 2-thiouridine(34) in tRNA + L-cysteinyl-[protein] + A + AMP + diphosphate + H(+). Functionally, catalyzes the 2-thiolation of uridine at the wobble position (U34) of tRNA, leading to the formation of s(2)U34. The chain is tRNA-specific 2-thiouridylase MnmA from Desulfosudis oleivorans (strain DSM 6200 / JCM 39069 / Hxd3) (Desulfococcus oleovorans).